The following is a 159-amino-acid chain: Probable cyclic pyranopterin monophosphate synthase (159 aa).

Substrate contacts are provided by residues 75–77 (LCH) and 111–112 (ME). Residue aspartate 126 is part of the active site.

Belongs to the MoaC family. Homohexamer; trimer of dimers.

The enzyme catalyses (8S)-3',8-cyclo-7,8-dihydroguanosine 5'-triphosphate = cyclic pyranopterin phosphate + diphosphate. Its pathway is cofactor biosynthesis; molybdopterin biosynthesis. Functionally, catalyzes the conversion of (8S)-3',8-cyclo-7,8-dihydroguanosine 5'-triphosphate to cyclic pyranopterin monophosphate (cPMP). The protein is Probable cyclic pyranopterin monophosphate synthase of Pyrococcus horikoshii (strain ATCC 700860 / DSM 12428 / JCM 9974 / NBRC 100139 / OT-3).